Consider the following 241-residue polypeptide: Leucyl/phenylalanyl-tRNA--protein transferase (241 aa).

It belongs to the L/F-transferase family.

The protein localises to the cytoplasm. The enzyme catalyses N-terminal L-lysyl-[protein] + L-leucyl-tRNA(Leu) = N-terminal L-leucyl-L-lysyl-[protein] + tRNA(Leu) + H(+). It carries out the reaction N-terminal L-arginyl-[protein] + L-leucyl-tRNA(Leu) = N-terminal L-leucyl-L-arginyl-[protein] + tRNA(Leu) + H(+). It catalyses the reaction L-phenylalanyl-tRNA(Phe) + an N-terminal L-alpha-aminoacyl-[protein] = an N-terminal L-phenylalanyl-L-alpha-aminoacyl-[protein] + tRNA(Phe). Functionally, functions in the N-end rule pathway of protein degradation where it conjugates Leu, Phe and, less efficiently, Met from aminoacyl-tRNAs to the N-termini of proteins containing an N-terminal arginine or lysine. This is Leucyl/phenylalanyl-tRNA--protein transferase from Neisseria meningitidis serogroup A / serotype 4A (strain DSM 15465 / Z2491).